Here is a 152-residue protein sequence, read N- to C-terminus: 2-C-methyl-D-erythritol 2,4-cyclodiphosphate synthase (152 aa).

Residues D8 and H10 each coordinate a divalent metal cation. 4-CDP-2-C-methyl-D-erythritol 2-phosphate-binding positions include 8–10 (DSH) and 34–35 (HS). A divalent metal cation is bound at residue H42. 4-CDP-2-C-methyl-D-erythritol 2-phosphate-binding positions include 56-58 (DIG), 61-65 (FPDTD), 100-106 (LDRPKLG), and 131-135 (FKTSE).

Belongs to the IspF family. In terms of assembly, homotrimer. A divalent metal cation serves as cofactor.

The enzyme catalyses 4-CDP-2-C-methyl-D-erythritol 2-phosphate = 2-C-methyl-D-erythritol 2,4-cyclic diphosphate + CMP. It functions in the pathway isoprenoid biosynthesis; isopentenyl diphosphate biosynthesis via DXP pathway; isopentenyl diphosphate from 1-deoxy-D-xylulose 5-phosphate: step 4/6. In terms of biological role, involved in the biosynthesis of isopentenyl diphosphate (IPP) and dimethylallyl diphosphate (DMAPP), two major building blocks of isoprenoid compounds. Catalyzes the conversion of 4-diphosphocytidyl-2-C-methyl-D-erythritol 2-phosphate (CDP-ME2P) to 2-C-methyl-D-erythritol 2,4-cyclodiphosphate (ME-CPP) with a corresponding release of cytidine 5-monophosphate (CMP). This Thermus thermophilus (strain ATCC 27634 / DSM 579 / HB8) protein is 2-C-methyl-D-erythritol 2,4-cyclodiphosphate synthase.